The chain runs to 370 residues: Seipin (370 aa).

The signal sequence occupies residues 1–18 (MNILLRLIVFALDPLGLG). At 19-55 (RRFLIRPAVNLGWNVYDRVRSKADEKVGTVRELVLRL) the chain is on the cytoplasmic side. The chain crosses the membrane as a helical span at residues 56–76 (GLIAFAVVLIIWLAVFMYAAF). Residues 77–251 (YYVYMPAISH…GLRYIMFNWP (175 aa)) lie on the Lumenal side of the membrane. The chain crosses the membrane as a helical span at residues 252–272 (VLSAIVAISTNLFFILVVFLL). Topologically, residues 273–370 (SWYHWSDAKW…RPTKKTTADH (98 aa)) are cytoplasmic. The tract at residues 346 to 370 (KSRSGKRESPDALRKRPTKKTTADH) is disordered. The span at 350–359 (GKRESPDALR) shows a compositional bias: basic and acidic residues.

Widely expressed, with highest levels detected in fat body, moderate levels detected in salivary gland, midgut and muscle, and weak expression detected in brain.

It is found in the endoplasmic reticulum membrane. The protein resides in the lipid droplet. Acts as a tissue-autonomous lipid modulator, preventing ectopic lipid accumulation in salivary gland (a non-adipose tissue) and in promoting lipid storage in fat tissue. Required for the growth and maturation of small nascent lipid droplets (LDs) into larger mature LDs. This is Seipin from Drosophila melanogaster (Fruit fly).